Reading from the N-terminus, the 431-residue chain is Histidinol dehydrogenase (431 aa).

Tyrosine 130, glutamine 191, and asparagine 214 together coordinate NAD(+). Substrate-binding residues include serine 237, glutamine 259, and histidine 262. Zn(2+)-binding residues include glutamine 259 and histidine 262. Residues glutamate 327 and histidine 328 each act as proton acceptor in the active site. Substrate is bound by residues histidine 328, aspartate 361, glutamate 415, and histidine 420. Aspartate 361 is a binding site for Zn(2+). A Zn(2+)-binding site is contributed by histidine 420.

The protein belongs to the histidinol dehydrogenase family. It depends on Zn(2+) as a cofactor.

The enzyme catalyses L-histidinol + 2 NAD(+) + H2O = L-histidine + 2 NADH + 3 H(+). The protein operates within amino-acid biosynthesis; L-histidine biosynthesis; L-histidine from 5-phospho-alpha-D-ribose 1-diphosphate: step 9/9. Its function is as follows. Catalyzes the sequential NAD-dependent oxidations of L-histidinol to L-histidinaldehyde and then to L-histidine. The sequence is that of Histidinol dehydrogenase from Rhodopseudomonas palustris (strain ATCC BAA-98 / CGA009).